The following is a 663-amino-acid chain: Probable potassium transport system protein Kup (663 aa).

Residues 1 to 23 are disordered; that stretch reads MSDNPSSRAGPEVVPTPPPSPAA. The next 12 helical transmembrane spans lie at 81–101, 137–157, 173–193, 201–221, 224–244, 248–268, 283–303, 315–335, 373–393, 399–419, 433–453, and 455–475; these read PANV…VVTF, LLII…VITP, PALE…LFFI, VGAV…ILGV, ILFD…AFFA, WHGF…EALY, WLLV…AILL, LLVP…AAIV, IYVP…VLGF, LAAA…LLFH, AWPL…ANIV, and VEEG…LLST.

Belongs to the HAK/KUP transporter (TC 2.A.72) family.

The protein resides in the cell inner membrane. It catalyses the reaction K(+)(in) + H(+)(in) = K(+)(out) + H(+)(out). Its function is as follows. Transport of potassium into the cell. Likely operates as a K(+):H(+) symporter. This Anaeromyxobacter sp. (strain Fw109-5) protein is Probable potassium transport system protein Kup.